We begin with the raw amino-acid sequence, 217 residues long: DNA repair protein homolog YobH (217 aa).

One can recognise a UmuC domain in the interval 1 to 68 (MAKAIQSSMW…RPLSKMWGIG (68 aa)).

The protein belongs to the DNA polymerase type-Y family.

This is DNA repair protein homolog YobH (yobH) from Bacillus subtilis (strain 168).